A 318-amino-acid polypeptide reads, in one-letter code: Actin-related protein 2/3 complex subunit 2A (318 aa).

The tract at residues 297-318 (RSMNNKSFKRLGLNEVNHTNSK) is disordered.

The protein belongs to the ARPC2 family. As to quaternary structure, component of the Arp2/3 complex composed of ARP2, ARP3, ARPC1/p41-ARC, ARPC2/p34-ARC, ARPC3/p21-ARC, ARPC4/p20-ARC and ARPC5/p16-ARC. Interacts with ARPC4. In terms of tissue distribution, expressed at low levels in all tissues with a relatively highest expression in inflorescences.

The protein localises to the cytoplasm. Its subcellular location is the cytoskeleton. It localises to the cell projection. In terms of biological role, functions as actin-binding component of the Arp2/3 complex which is involved in regulation of actin polymerization and together with an activating nucleation-promoting factor (NPF) mediates the formation of branched actin networks. Seems to contact the mother actin filament. Arp2/3 complex plays a critical role in the control of cell morphogenesis via the modulation of cell polarity development. The chain is Actin-related protein 2/3 complex subunit 2A (ARPC2A) from Arabidopsis thaliana (Mouse-ear cress).